Consider the following 215-residue polypeptide: Adenylate kinase (215 aa).

10–15 (GAGKGT) contributes to the ATP binding site. The NMP stretch occupies residues 30–59 (STGDIFRKNIKEKTELGQKVEGLLAQGKLV). AMP-binding positions include threonine 31, arginine 36, 57 to 59 (KLV), 85 to 88 (GFPR), and glutamine 92. The tract at residues 126 to 163 (GRRVCPSCGASYHIDNNPTKVDGICDACQTPVIQREDD) is LID. Position 127 (arginine 127) interacts with ATP. 2 residues coordinate Zn(2+): cysteine 130 and cysteine 133. Residue 136–137 (SY) participates in ATP binding. Positions 150 and 153 each coordinate Zn(2+). AMP is bound by residues arginine 160 and arginine 171. Leucine 199 is a binding site for ATP.

This sequence belongs to the adenylate kinase family. In terms of assembly, monomer.

Its subcellular location is the cytoplasm. The enzyme catalyses AMP + ATP = 2 ADP. The protein operates within purine metabolism; AMP biosynthesis via salvage pathway; AMP from ADP: step 1/1. Its function is as follows. Catalyzes the reversible transfer of the terminal phosphate group between ATP and AMP. Plays an important role in cellular energy homeostasis and in adenine nucleotide metabolism. This is Adenylate kinase from Finegoldia magna (strain ATCC 29328 / DSM 20472 / WAL 2508) (Peptostreptococcus magnus).